Reading from the N-terminus, the 553-residue chain is Syntaxin-binding protein 4 (553 aa).

Residues Ser-10, Ser-12, Ser-99, and Ser-212 each carry the phosphoserine modification. Positions 19 to 105 (AFQMITIAKE…RLESAWEIAF (87 aa)) constitute a PDZ domain. Residues 291 to 417 (SSEADEMERL…VLDCQLRKSE (127 aa)) adopt a coiled-coil conformation. Ser-463 carries the phosphoserine modification. The region spanning 496–529 (DCLPYGWEEAYTADGIKYFINHVTQTTSWIHPVM) is the WW domain.

In terms of assembly, interacts with STX4A. Phosphorylated on Ser-99 by PKB/AKT2 after insulin treatment. Phosphorylation on Ser-99 abolishes the interaction with STX4A.

It localises to the cytoplasm. Its function is as follows. Plays a role in the translocation of transport vesicles from the cytoplasm to the plasma membrane. Inhibits the translocation of SLC2A4 from intracellular vesicles to the plasma membrane by STX4A binding and preventing the interaction between STX4A and VAMP2. Stimulation with insulin disrupts the interaction with STX4A, leading to increased levels of SLC2A4 at the plasma membrane. May also play a role in the regulation of insulin release by pancreatic beta cells after stimulation by glucose. The protein is Syntaxin-binding protein 4 (STXBP4) of Homo sapiens (Human).